Consider the following 45-residue polypeptide: Large ribosomal subunit protein bL34 (45 aa).

The interval 1-45 is disordered; the sequence is MTKRTLGGTSRKRKRVSGFRVRMRSHTGRRVIRTRRKRGRSRLAV. Over residues 10 to 45 the composition is skewed to basic residues; the sequence is SRKRKRVSGFRVRMRSHTGRRVIRTRRKRGRSRLAV.

The protein belongs to the bacterial ribosomal protein bL34 family.

The polypeptide is Large ribosomal subunit protein bL34 (Parasynechococcus marenigrum (strain WH8102)).